A 459-amino-acid polypeptide reads, in one-letter code: Putative metabolite transport protein YdjK (459 aa).

Topologically, residues 1 to 25 are cytoplasmic; the sequence is MEQITKPHCGARLDRLPDCRWHSSM. Residues 26-46 form a helical membrane-spanning segment; it reads FAIVAFGLLVCWSNAVGGLIL. Topologically, residues 47-60 are periplasmic; the sequence is AQLKALGWTDNSTT. A helical transmembrane segment spans residues 61–81; it reads ATFSAITTAGMFLGALVGGII. Topologically, residues 82 to 90 are cytoplasmic; it reads GDKTGRRNA. Residues 91-111 traverse the membrane as a helical segment; that stretch reads FILYEAIHIASMVVGAFSPNM. Residue aspartate 112 is a topological domain, periplasmic. Residues 113-133 traverse the membrane as a helical segment; the sequence is FLIACRFVMGVGLGALLVTLF. At 134-153 the chain is on the cytoplasmic side; sequence AGFTEYMPGRNRGTWSSRVS. A helical transmembrane segment spans residues 154 to 174; sequence FIGNWSYPLCSLIAMGLTPLI. Residues 175-181 lie on the Periplasmic side of the membrane; the sequence is SAEWNWR. A helical membrane pass occupies residues 182–202; that stretch reads VQLLIPAILSLIATALAWRYF. The Cytoplasmic portion of the chain corresponds to 203–271; it reads PESPRWLESR…LLKRVILGSC (69 aa). The helical transmembrane segment at 272–292 threads the bilayer; it reads VLIAMNVVQYTLINWLPTIFM. Over 293 to 301 the chain is Periplasmic; sequence TQGINLKDS. Residues 302 to 322 form a helical membrane-spanning segment; the sequence is IVLNTMSMFGAPFGIFIAMLV. Over 323–329 the chain is Cytoplasmic; it reads MDKIPRK. Residues 330–350 traverse the membrane as a helical segment; it reads TMGVGLLILIAVLGYIYSLQT. Serine 351 is a topological domain (periplasmic). A helical membrane pass occupies residues 352-372; sequence MLLITLIGFFLITFVYMYVCY. Residues 373–399 lie on the Cytoplasmic side of the membrane; the sequence is ASAVYVPEIWPTEAKLRGSGLANAVGR. Helical transmembrane passes span 400-420 and 421-441; these read ISGIAAPYAVAVLLSSYGVTG and VFILLGAVSIIVAIAIATIGI. Topologically, residues 442–459 are cytoplasmic; it reads ETKGVSVESLSIDAVANK.

Belongs to the major facilitator superfamily. Sugar transporter (TC 2.A.1.1) family.

It is found in the cell inner membrane. This Escherichia coli (strain K12) protein is Putative metabolite transport protein YdjK (ydjK).